Here is a 160-residue protein sequence, read N- to C-terminus: Small ribosomal subunit protein uS19 (160 aa).

The protein belongs to the universal ribosomal protein uS19 family.

Protein S19 forms a complex with S13 that binds strongly to the 16S ribosomal RNA. This is Small ribosomal subunit protein uS19 from Pyrobaculum islandicum (strain DSM 4184 / JCM 9189 / GEO3).